A 124-amino-acid chain; its full sequence is Biogenesis of lysosome-related organelles complex 1 subunit CNL1 (124 aa).

The interval Met1 to Asp20 is disordered. Residues Ile75–Val98 adopt a coiled-coil conformation.

The protein belongs to the BLOC1S4 family. Component of the biogenesis of lysosome-related organelles complex-1 (BLOC-1).

It localises to the cytoplasm. Functionally, component of the biogenesis of lysosome-related organelles complex-1 (BLOC-1), a complex that is involved in endosomal cargo sorting. This Kluyveromyces lactis (strain ATCC 8585 / CBS 2359 / DSM 70799 / NBRC 1267 / NRRL Y-1140 / WM37) (Yeast) protein is Biogenesis of lysosome-related organelles complex 1 subunit CNL1 (CLN1).